The chain runs to 238 residues: Endothelin-3 (238 aa).

The N-terminal stretch at 1–16 is a signal peptide; the sequence is MEPGLWLLFGLTVTSA. Residues 17–94 constitute a propeptide that is removed on maturation; it reads AGFVPCSQSG…AEGAPEHHRS (78 aa). The disordered stretch occupies residues 24–89; it reads QSGDAGRRGV…GQEQAAEGAP (66 aa). 2 disulfides stabilise this stretch: C97–C111 and C99–C107. A propeptide spanning residues 118-238 is cleaved from the precursor; sequence INTPEQTVPY…PRCLFQEGAP (121 aa). The tract at residues 159-173 is endothelin-like; the sequence is CACVGRYDKACLHFC. Positions 183-219 are disordered; it reads SRTAEKTDKEEEGKVEVKDQQSKQALDLHHPKLMPGS. Over residues 185 to 212 the composition is skewed to basic and acidic residues; sequence TAEKTDKEEEGKVEVKDQQSKQALDLHH.

It belongs to the endothelin/sarafotoxin family. As to expression, expressed in trophoblasts and placental stem villi vessels, but not in cultured placental smooth muscle cells.

It localises to the secreted. Functionally, endothelins are endothelium-derived vasoconstrictor peptides. The chain is Endothelin-3 (EDN3) from Homo sapiens (Human).